The sequence spans 150 residues: Natriuretic peptides A (150 aa).

The N-terminal stretch at 1-24 (MSSFTITVSFLLVLVFQFPGQTRA) is a signal peptide. 2 propeptides span residues 25–122 (NPVY…AAPR) and 92–102 (DGGALGRGPWD). Residues 77–100 (LEVPPWTGEVNPAQRDGGALGRGP) form a disordered region. At S128 the chain carries Phosphoserine. Cysteines 129 and 145 form a disulfide.

Belongs to the natriuretic peptide family. In terms of assembly, homodimer; disulfide-linked antiparallel dimer. The precursor molecule is proteolytically cleaved by CORIN at Arg-122 to produce the atrial natriuretic peptide. Undergoes further proteolytic cleavage by unknown proteases to give rise to long-acting natriuretic peptide, vessel dilator and kaliuretic peptide. Additional processing gives rise to the auriculin and atriopeptin peptides. In the kidneys, alternative processing by an unknown protease results in the peptide urodilatin. In terms of processing, cleavage by MME initiates degradation of the factor and thereby regulates its activity. Degradation by IDE results in reduced activation of NPR1 (in vitro). During IDE degradation, the resulting products can temporarily stimulate NPR2 to produce cGMP, before the fragments are completely degraded and inactivated by IDE (in vitro). Post-translationally, degraded by IDE. Phosphorylation on Ser-128 decreases vasorelaxant activity. Brain (at protein level).

It localises to the secreted. The protein localises to the perikaryon. The protein resides in the cell projection. Functionally, hormone that plays a key role in mediating cardio-renal homeostasis, and is involved in vascular remodeling and regulating energy metabolism. Acts by specifically binding and stimulating NPR1 to produce cGMP, which in turn activates effector proteins, such as PRKG1, that drive various biological responses. Regulates vasodilation, natriuresis, diuresis and aldosterone synthesis and is therefore essential for regulating blood pressure, controlling the extracellular fluid volume and maintaining the fluid-electrolyte balance. Also involved in inhibiting cardiac remodeling and cardiac hypertrophy by inducing cardiomyocyte apoptosis and attenuating the growth of cardiomyocytes and fibroblasts. Plays a role in female pregnancy by promoting trophoblast invasion and spiral artery remodeling in uterus, and thus prevents pregnancy-induced hypertension. In adipose tissue, acts in various cGMP- and PKG-dependent pathways to regulate lipid metabolism and energy homeostasis. This includes up-regulating lipid metabolism and mitochondrial oxygen utilization by activating the AMP-activated protein kinase (AMPK), and increasing energy expenditure by acting via MAPK11 to promote the UCP1-dependent thermogenesis of brown adipose tissue. Binds the clearance receptor NPR3 which removes the hormone from circulation. May have a role in cardio-renal homeostasis through regulation of natriuresis, diuresis, vasodilation, and inhibiting aldosterone synthesis. In vitro, promotes the production of cGMP and induces vasodilation. May promote natriuresis, at least in part, by enhancing prostaglandin E2 synthesis resulting in the inhibition of renal Na+-K+-ATPase. However reports on the involvement of this peptide in mammal blood volume and blood pressure homeostasis are conflicting; according to a report, in vivo it is not sufficient to activate cGMP and does not inhibit collecting duct transport nor effect diuresis and natriuresis. Appears to bind to specific receptors that are distinct from the receptors bound by atrial natriuretic peptide and vessel dilator. Possibly enhances protein excretion in urine by decreasing proximal tubular protein reabsorption. In terms of biological role, may have a role in cardio-renal homeostasis through regulation of natriuresis, diuresis, and vasodilation. In vitro, promotes the production of cGMP and induces vasodilation. May promote natriuresis, at least in part, by enhancing prostaglandin E2 synthesis resulting in the inhibition of renal Na+-K+-ATPase. However reports on the involvement of this peptide in mammal blood volume and blood pressure homeostasis are conflicting; according to a report it is not sufficient to activate cGMP and does not inhibit collecting duct transport nor effect diuresis and natriuresis. Appears to bind to specific receptors that are distinct from the receptors bound by the atrial natriuretic and long-acting natriuretic peptides. Possibly functions in protein excretion in urine by maintaining the integrity of the proximal tubules and enhancing protein excretion by decreasing proximal tubular protein reabsorption. Its function is as follows. May have a role in cardio-renal homeostasis through regulation of diuresis and inhibiting aldosterone synthesis. In vitro, promotes the production of cGMP and induces vasodilation. May promote natriuresis, at least in part, by enhancing prostaglandin E2 synthesis resulting in the inhibition of renal Na+-K+-ATPase. May have a role in potassium excretion but not sodium excretion (natriuresis). Possibly enhances protein excretion in urine by decreasing proximal tubular protein reabsorption. Functionally, hormone produced in the kidneys that appears to be important for maintaining cardio-renal homeostasis. Mediates vasodilation, natriuresis and diuresis primarily in the renal system, in order to maintain the extracellular fluid volume and control the fluid-electrolyte balance. Specifically binds and stimulates cGMP production by renal transmembrane receptors, likely NPR1. Urodilatin not ANP, may be the natriuretic peptide responsible for the regulation of sodium and water homeostasis in the kidney. May have a role in cardio-renal homeostasis through regulation of natriuresis and vasodilation. In vivo promotes natriuresis and in vitro, vasodilates renal artery strips. In terms of biological role, may have a role in cardio-renal homeostasis through regulation of regulation of natriuresis and vasodilation. In vivo promotes natriuresis. In vitro, vasodilates intestinal smooth muscle but not smooth muscle strips. Its function is as follows. May have a role in cardio-renal homeostasis through regulation of natriuresis and vasodilation. In vivo promotes natriuresis. In vitro, selectively vasodilates intestinal and vascular smooth muscle strips. Functionally, may have a role in cardio-renal homeostasis through regulation of natriuresis and vasodilation. In vivo promotes natriuresis. In vitro, selectively vasodilates intestinal smooth muscle but not vascular smooth muscle strips. The chain is Natriuretic peptides A (NPPA) from Sus scrofa (Pig).